A 219-amino-acid polypeptide reads, in one-letter code: Thymidylate kinase (219 aa).

7–14 (GIDGCGKT) provides a ligand contact to ATP.

It belongs to the thymidylate kinase family.

The enzyme catalyses dTMP + ATP = dTDP + ADP. In terms of biological role, phosphorylation of dTMP to form dTDP in both de novo and salvage pathways of dTTP synthesis. This Anaplasma phagocytophilum (strain HZ) protein is Thymidylate kinase.